The chain runs to 145 residues: uncharacterized protein (145 aa).

This is an uncharacterized protein from Rickettsia prowazekii (strain Madrid E).